The primary structure comprises 297 residues: MATAILPSTSGVIGLWDGTTDGKEGFMDYANGDTNVKQPKEYEIQVHDIRKLDPQPTLLKNGYELVDIPTVVTDEQFIESGKSDEGNAYIKDVYFAECKRIIEEVSGGVDLIIPVSFRMREQKGEKESTTKKLGNIESRYAPRPVAHLDRDTPTAITVLEETVGKEKAQELLSKHKRWAQVNVWRPIGNPATMWPLCFLNHDRIPTWNYDTHVGHVWSLNDPRVSDRGQKTYDCVVKHDDRYDYHYVSDLRPEECLVFCSFDSIPKYAMPHSAFWDNNVPADAPNRRSIEVRSLVFF.

The protein belongs to the asaB hydroxylase/desaturase family.

It functions in the pathway secondary metabolite biosynthesis. Oxidoreductase; part of the gene cluster that mediates the biosynthesis of squalestatin S1 (SQS1, also known as zaragozic acid A), a heavily oxidized fungal polyketide that offers potent cholesterol lowering activity by targeting squalene synthase (SS). SQS1 is composed of a 2,8-dioxobicyclic[3.2.1]octane-3,4,5-tricarboxyclic acid core that is connected to two lipophilic polyketide arms. These initial steps feature the priming of an unusual benzoic acid starter unit onto the highly reducing polyketide synthase pks2, followed by oxaloacetate extension and product release to generate a tricarboxylic acid containing product. The phenylalanine ammonia lyase (PAL) M7 and the acyl-CoA ligase M9 are involved in transforming phenylalanine into benzoyl-CoA. The citrate synthase-like protein R3 is involved in connecting the C-alpha-carbons of the hexaketide chain and oxaloacetate to afford the tricarboxylic acid unit. The potential hydrolytic enzymes, M8 and M10, are in close proximity to pks2 and may participate in product release. On the other side, the tetraketide arm is synthesized by a the squalestatin tetraketide synthase pks1 and enzymatically esterified to the core in the last biosynthetic step, by the acetyltransferase M4. The biosynthesis of the tetraketide must involve 3 rounds of chain extension. After the first and second rounds methyl-transfer occurs, and in all rounds of extension the ketoreductase and dehydratase are active. The enoyl reductase and C-MeT of pks1 are not active in the final round of extension. The acetyltransferase M4 appears to have a broad substrate selectivity for its acyl CoA substrate, allowing the in vitro synthesis of novel squalestatins. The biosynthesis of SQS1 requires several oxidative steps likely performed by oxidoreductases M1, R1 and R2. Finally, in support of the identification of the cluster as being responsible for SQS1 production, the cluster contains a gene encoding a putative squalene synthase (SS) R6, suggesting a likely mechanism for self-resistance. This is Oxidoreductase R1 from Phoma sp. (strain ATCC 20986 / MF5453).